The sequence spans 158 residues: Large ribosomal subunit protein uL15 (158 aa).

Residues 1–13 (MKLNEIKDNEGST) show a composition bias toward basic and acidic residues. The segment at 1–45 (MKLNEIKDNEGSTHSRKRLGRGIGSGSGKTGGRGVKGQKSRSGVA) is disordered. Residues 21–35 (RGIGSGSGKTGGRGV) are compositionally biased toward gly residues.

It belongs to the universal ribosomal protein uL15 family. Part of the 50S ribosomal subunit.

In terms of biological role, binds to the 23S rRNA. This is Large ribosomal subunit protein uL15 from Rhizobium johnstonii (strain DSM 114642 / LMG 32736 / 3841) (Rhizobium leguminosarum bv. viciae).